Reading from the N-terminus, the 180-residue chain is Phosphoribosylaminoimidazole carboxylase (180 aa).

Residues S35, D38, S62, K65, G89, and S91 each contribute to the substrate site.

The protein belongs to the AIR carboxylase family. Class II subfamily.

It catalyses the reaction 5-amino-1-(5-phospho-D-ribosyl)imidazole-4-carboxylate + H(+) = 5-amino-1-(5-phospho-beta-D-ribosyl)imidazole + CO2. It participates in purine metabolism; IMP biosynthesis via de novo pathway; 5-amino-1-(5-phospho-D-ribosyl)imidazole-4-carboxylate from 5-amino-1-(5-phospho-D-ribosyl)imidazole (carboxylase route): step 1/1. In terms of biological role, catalyzes the reversible conversion of 5-aminoimidazole ribonucleotide (AIR) and CO(2) to 4-carboxy-5-aminoimidazole ribonucleotide (CAIR). This chain is Phosphoribosylaminoimidazole carboxylase, found in Archaeoglobus fulgidus (strain ATCC 49558 / DSM 4304 / JCM 9628 / NBRC 100126 / VC-16).